Consider the following 272-residue polypeptide: Ribosomal RNA small subunit methyltransferase A (272 aa).

S-adenosyl-L-methionine contacts are provided by Asn18, Leu20, Gly45, Glu66, Asp91, and Asn113.

The protein belongs to the class I-like SAM-binding methyltransferase superfamily. rRNA adenine N(6)-methyltransferase family. RsmA subfamily.

The protein resides in the cytoplasm. It carries out the reaction adenosine(1518)/adenosine(1519) in 16S rRNA + 4 S-adenosyl-L-methionine = N(6)-dimethyladenosine(1518)/N(6)-dimethyladenosine(1519) in 16S rRNA + 4 S-adenosyl-L-homocysteine + 4 H(+). In terms of biological role, specifically dimethylates two adjacent adenosines (A1518 and A1519) in the loop of a conserved hairpin near the 3'-end of 16S rRNA in the 30S particle. May play a critical role in biogenesis of 30S subunits. The sequence is that of Ribosomal RNA small subunit methyltransferase A from Yersinia enterocolitica serotype O:8 / biotype 1B (strain NCTC 13174 / 8081).